We begin with the raw amino-acid sequence, 88 residues long: Small ribosomal subunit protein uS15 (88 aa).

This sequence belongs to the universal ribosomal protein uS15 family. Part of the 30S ribosomal subunit. Forms a bridge to the 50S subunit in the 70S ribosome, contacting the 23S rRNA.

In terms of biological role, one of the primary rRNA binding proteins, it binds directly to 16S rRNA where it helps nucleate assembly of the platform of the 30S subunit by binding and bridging several RNA helices of the 16S rRNA. Functionally, forms an intersubunit bridge (bridge B4) with the 23S rRNA of the 50S subunit in the ribosome. The chain is Small ribosomal subunit protein uS15 from Paracidovorax citrulli (strain AAC00-1) (Acidovorax citrulli).